The primary structure comprises 143 residues: MTRVLATGTFDLLHPGHVFFLRQARSFGDELYVLVARDSMIKHKAQPIVPEGQRLKMISAFGVVDKALLGSESDIFEPLKEINPDIIVLGHDQFFDTGELEKNLGERGFKAKVVRIDDAMKCELCSSGRIIKRVLERYGQNEE.

ATP contacts are provided by residues 9 to 10, 14 to 17, and Asp92; these read TF and HPGH.

Belongs to the archaeal FAD synthase family. As to quaternary structure, homodimer. The cofactor is a divalent metal cation.

The enzyme catalyses FMN + ATP + H(+) = FAD + diphosphate. The protein operates within cofactor biosynthesis; FAD biosynthesis; FAD from FMN: step 1/1. In terms of biological role, catalyzes the transfer of the AMP portion of ATP to flavin mononucleotide (FMN) to produce flavin adenine dinucleotide (FAD) coenzyme. The sequence is that of FAD synthase from Methanococcoides burtonii (strain DSM 6242 / NBRC 107633 / OCM 468 / ACE-M).